The primary structure comprises 293 residues: Protoheme IX farnesyltransferase (293 aa).

9 consecutive transmembrane segments (helical) span residues 9–29 (LIKP…FLLA), 38–58 (YIIL…SCVL), 86–106 (FVKN…LFLG), 111–131 (LLTI…YSLW), 137–157 (IYST…GYCT), 167–187 (WLLF…ITIF), 211–231 (IHMI…TVLG), 234–254 (SYTF…TGWY), and 271–291 (ILSI…SIFI).

Belongs to the UbiA prenyltransferase family. Protoheme IX farnesyltransferase subfamily.

The protein resides in the cell inner membrane. It carries out the reaction heme b + (2E,6E)-farnesyl diphosphate + H2O = Fe(II)-heme o + diphosphate. Its pathway is porphyrin-containing compound metabolism; heme O biosynthesis; heme O from protoheme: step 1/1. In terms of biological role, converts heme B (protoheme IX) to heme O by substitution of the vinyl group on carbon 2 of heme B porphyrin ring with a hydroxyethyl farnesyl side group. The sequence is that of Protoheme IX farnesyltransferase from Blochmanniella floridana.